Consider the following 174-residue polypeptide: Xanthine-guanine phosphoribosyltransferase (174 aa).

5-phospho-alpha-D-ribose 1-diphosphate-binding positions include 49–50 and 108–116; these read RG and DDLVDTGAT. Position 109 (aspartate 109) interacts with Mg(2+). Residues aspartate 112 and isoleucine 155 each contribute to the guanine site. 2 residues coordinate xanthine: aspartate 112 and isoleucine 155. Residues 112–116 and 154–155 contribute to the GMP site; these read DTGAT and WI.

It belongs to the purine/pyrimidine phosphoribosyltransferase family. XGPT subfamily. Homotetramer. It depends on Mg(2+) as a cofactor.

The protein localises to the cell inner membrane. It carries out the reaction GMP + diphosphate = guanine + 5-phospho-alpha-D-ribose 1-diphosphate. The enzyme catalyses XMP + diphosphate = xanthine + 5-phospho-alpha-D-ribose 1-diphosphate. The catalysed reaction is IMP + diphosphate = hypoxanthine + 5-phospho-alpha-D-ribose 1-diphosphate. Its pathway is purine metabolism; GMP biosynthesis via salvage pathway; GMP from guanine: step 1/1. It participates in purine metabolism; XMP biosynthesis via salvage pathway; XMP from xanthine: step 1/1. In terms of biological role, purine salvage pathway enzyme that catalyzes the transfer of the ribosyl-5-phosphate group from 5-phospho-alpha-D-ribose 1-diphosphate (PRPP) to the N9 position of the 6-oxopurines guanine and xanthine to form the corresponding ribonucleotides GMP (guanosine 5'-monophosphate) and XMP (xanthosine 5'-monophosphate), with the release of PPi. To a lesser extent, also acts on hypoxanthine. In Rhodopseudomonas palustris (strain BisB18), this protein is Xanthine-guanine phosphoribosyltransferase.